A 384-amino-acid chain; its full sequence is MKKQILYLIVLQQLFLCSAYAQQKKSGNIPYRVNVQADSAKQKAIIDNKWVAVGINKPYALQYDDKLRFNGKPSYRFELKAEDNSLEGYAAGETKGRTELSYSYATTNDFKKFPPSVYQNAQKLKTVYHYGKGICEQGSSRSYTFSVYIPSSFPDNATTIFAQWHGAPSRTLVATPEGEIKTLSIEEFLALYDRMIFKKNIAHDKVEKKDKDGKITYVAGKPNGWKVEQGGYPTLAFGFSKGYFYIKANSDRQWLTDKADRNNANPENSEVMKPYSSEYKTSTIAYKMPFAQFPKDCWITFDVAIDWTKYGKEANTILKPGKLDVMMTYTKNKKPQKAHIVNQQEILIGRNDDDGYYFKFGIYRVGNSTVPVTYNLSGYSETAR.

A signal peptide spans 1 to 21; the sequence is MKKQILYLIVLQQLFLCSAYA. Gln22 is modified (blocked amino end (Gln)). A glycan (O-linked (Man...) serine) is linked at Ser39.

Monomer. The N-terminus is blocked.

The protein resides in the periplasm. It carries out the reaction Eliminative cleavage of polysaccharides containing (1-&gt;4)-linked D-glucuronate or L-iduronate residues and (1-&gt;4)-alpha-linked 2-sulfoamino-2-deoxy-6-sulfo-D-glucose residues to give oligosaccharides with terminal 4-deoxy-alpha-D-gluc-4-enuronosyl groups at their non-reducing ends.. Degrades heparin and heparan sulfate. Also implicated in the release of heparin-bound growth factors from the extracellular matrix. The chain is Heparin lyase I from Pedobacter heparinus (Flavobacterium heparinum).